The chain runs to 185 residues: ATP synthase subunit b, cyanelle (185 aa).

The helical transmembrane segment at 36-58 (LINLLVIFFLLIYQGRPFFTALL) threads the bilayer.

It belongs to the ATPase B chain family. In terms of assembly, F-type ATPases have 2 components, F(1) - the catalytic core - and F(0) - the membrane proton channel. F(1) has five subunits: alpha(3), beta(3), gamma(1), delta(1), epsilon(1). F(0) has four main subunits: a(1), b(1), b'(1) and c(10-14). The alpha and beta chains form an alternating ring which encloses part of the gamma chain. F(1) is attached to F(0) by a central stalk formed by the gamma and epsilon chains, while a peripheral stalk is formed by the delta, b and b' chains.

It localises to the plastid. The protein resides in the cyanelle thylakoid membrane. Its function is as follows. F(1)F(0) ATP synthase produces ATP from ADP in the presence of a proton or sodium gradient. F-type ATPases consist of two structural domains, F(1) containing the extramembraneous catalytic core and F(0) containing the membrane proton channel, linked together by a central stalk and a peripheral stalk. During catalysis, ATP synthesis in the catalytic domain of F(1) is coupled via a rotary mechanism of the central stalk subunits to proton translocation. Functionally, component of the F(0) channel, it forms part of the peripheral stalk, linking F(1) to F(0). The chain is ATP synthase subunit b, cyanelle from Cyanophora paradoxa.